We begin with the raw amino-acid sequence, 486 residues long: N-succinylglutamate 5-semialdehyde dehydrogenase (486 aa).

220-225 lines the NAD(+) pocket; sequence GSSRTG. Residues E243 and C277 contribute to the active site.

It belongs to the aldehyde dehydrogenase family. AstD subfamily.

It catalyses the reaction N-succinyl-L-glutamate 5-semialdehyde + NAD(+) + H2O = N-succinyl-L-glutamate + NADH + 2 H(+). The protein operates within amino-acid degradation; L-arginine degradation via AST pathway; L-glutamate and succinate from L-arginine: step 4/5. In terms of biological role, catalyzes the NAD-dependent reduction of succinylglutamate semialdehyde into succinylglutamate. The polypeptide is N-succinylglutamate 5-semialdehyde dehydrogenase (Shewanella frigidimarina (strain NCIMB 400)).